We begin with the raw amino-acid sequence, 101 residues long: Urease subunit beta (101 aa).

This sequence belongs to the urease beta subunit family. Heterotrimer of UreA (gamma), UreB (beta) and UreC (alpha) subunits. Three heterotrimers associate to form the active enzyme.

The protein resides in the cytoplasm. The catalysed reaction is urea + 2 H2O + H(+) = hydrogencarbonate + 2 NH4(+). It participates in nitrogen metabolism; urea degradation; CO(2) and NH(3) from urea (urease route): step 1/1. The sequence is that of Urease subunit beta from Ruegeria sp. (strain TM1040) (Silicibacter sp.).